Consider the following 1014-residue polypeptide: Latrophilin-like protein 1 (1014 aa).

Positions 1-27 are cleaved as a signal peptide; that stretch reads MRRNKTTYSLLQTILVACLLTVTPTFA. The N-linked (GlcNAc...) asparagine glycan is linked to Asn4. The Extracellular portion of the chain corresponds to 28–555; the sequence is SNKPTTDESG…IDQTLLTLLT (528 aa). The SUEL-type lectin domain maps to 43 to 134; it reads ICDGEAAELS…KYLEVKYNCV (92 aa). Positions 359–542 constitute a GAIN-B domain; the sequence is ESNVIVQPAI…AVLMDVRGHD (184 aa). Residues Asn473 and Asn518 are each glycosylated (N-linked (GlcNAc...) asparagine). 2 disulfide bridges follow: Cys497-Cys524 and Cys512-Cys526. The segment at 497–542 is GPS; sequence CVWWNHHELKWKPSGCKLSYHNKTMTSCDCTHLTHFAVLMDVRGHD. The chain crosses the membrane as a helical span at residues 556-576; sequence YVGCIISIICLLLTFFAYLIF. Over 577 to 584 the chain is Cytoplasmic; the sequence is SRNGGDRV. Residues 585 to 605 traverse the membrane as a helical segment; that stretch reads FIHENLCLSLAIAEITFLAGI. At 606–613 the chain is on the extracellular side; it reads TRTEDSLQ. Residues 614 to 634 form a helical membrane-spanning segment; sequence CGIIAVALMYMFLSALTWMLL. Residues 635–653 are Cytoplasmic-facing; sequence EGYHIHRMLTEVFPSDPRR. A helical membrane pass occupies residues 654–674; it reads FTYLLVGYIPPAIITLVAYLY. Over 675–692 the chain is Extracellular; it reads NSDGFGTPDHCWLSTQNN. The chain crosses the membrane as a helical span at residues 693 to 713; it reads FIWFFAGPACFIFCANSLVLV. Residues 714 to 745 are Cytoplasmic-facing; the sequence is KTLCTVYQHTSGGYLPCRHDVDSGRSIRNWVK. A helical membrane pass occupies residues 746-766; that stretch reads GSLALASLLGVTWIFGLFWVE. Topologically, residues 767-770 are extracellular; the sequence is DSRS. A helical membrane pass occupies residues 771 to 791; the sequence is IVMAYVFTISNSLQGLFIFLF. Residues 792–1014 are Cytoplasmic-facing; the sequence is HVVFAEKMRK…NKPSMYCQDL (223 aa). 2 disordered regions span residues 814 to 833 and 932 to 994; these read GSSNSSPNHKRHNVQRDLMS and YQGW…EVTP. The segment covering 941–952 has biased composition (pro residues); sequence PEFSPPPPPLST. The span at 965–986 shows a compositional bias: low complexity; that stretch reads SGRRPPSSKMSDDSAYSDGSSS.

Belongs to the G-protein coupled receptor 2 family. LN-TM7 subfamily. As to quaternary structure, monomer and homodimer. In terms of processing, autoproteolytically processed at the GPS region of the GAIN-B domain; this cleavage modulates receptor activity. Expressed in epidermal precursor cells and pharyngeal primordium. In adults expression is seen in pharyngeal muscle cells and nervous system, the nerve ring, the gonad, and the vulva.

It localises to the cell membrane. In terms of biological role, has a role in the establishment of anterior-posterior polarity in tissues during embryogenesis. Required for the alignment of the mitotic spindles and division planes. May have a role in cell death events. Required for normal defection and oocyte fertilization. Involved in sperm function. Operates in pharyngeal pumping during feeding. In Caenorhabditis elegans, this protein is Latrophilin-like protein 1.